We begin with the raw amino-acid sequence, 221 residues long: Thiamine-phosphate synthase (221 aa).

Residues 46-50 (QFREK) and Asn82 each bind 4-amino-2-methyl-5-(diphosphooxymethyl)pyrimidine. Residues Asp83 and Asp102 each coordinate Mg(2+). Ser121 is a binding site for 4-amino-2-methyl-5-(diphosphooxymethyl)pyrimidine. Residue 148 to 150 (TQS) participates in 2-[(2R,5Z)-2-carboxy-4-methylthiazol-5(2H)-ylidene]ethyl phosphate binding. 4-amino-2-methyl-5-(diphosphooxymethyl)pyrimidine is bound at residue Lys151. Residues Gly180 and 200-201 (IS) contribute to the 2-[(2R,5Z)-2-carboxy-4-methylthiazol-5(2H)-ylidene]ethyl phosphate site.

It belongs to the thiamine-phosphate synthase family. The cofactor is Mg(2+).

The enzyme catalyses 2-[(2R,5Z)-2-carboxy-4-methylthiazol-5(2H)-ylidene]ethyl phosphate + 4-amino-2-methyl-5-(diphosphooxymethyl)pyrimidine + 2 H(+) = thiamine phosphate + CO2 + diphosphate. It carries out the reaction 2-(2-carboxy-4-methylthiazol-5-yl)ethyl phosphate + 4-amino-2-methyl-5-(diphosphooxymethyl)pyrimidine + 2 H(+) = thiamine phosphate + CO2 + diphosphate. The catalysed reaction is 4-methyl-5-(2-phosphooxyethyl)-thiazole + 4-amino-2-methyl-5-(diphosphooxymethyl)pyrimidine + H(+) = thiamine phosphate + diphosphate. It functions in the pathway cofactor biosynthesis; thiamine diphosphate biosynthesis; thiamine phosphate from 4-amino-2-methyl-5-diphosphomethylpyrimidine and 4-methyl-5-(2-phosphoethyl)-thiazole: step 1/1. Functionally, condenses 4-methyl-5-(beta-hydroxyethyl)thiazole monophosphate (THZ-P) and 2-methyl-4-amino-5-hydroxymethyl pyrimidine pyrophosphate (HMP-PP) to form thiamine monophosphate (TMP). This is Thiamine-phosphate synthase from Pasteurella multocida (strain Pm70).